A 305-amino-acid chain; its full sequence is tRNA pseudouridine synthase B (305 aa).

D38 functions as the Nucleophile in the catalytic mechanism.

Belongs to the pseudouridine synthase TruB family. Type 1 subfamily.

It catalyses the reaction uridine(55) in tRNA = pseudouridine(55) in tRNA. Functionally, responsible for synthesis of pseudouridine from uracil-55 in the psi GC loop of transfer RNAs. This is tRNA pseudouridine synthase B from Latilactobacillus sakei subsp. sakei (strain 23K) (Lactobacillus sakei subsp. sakei).